Here is a 503-residue protein sequence, read N- to C-terminus: ATP synthase subunit alpha (503 aa).

169 to 176 (GDRKTGKT) is an ATP binding site.

Belongs to the ATPase alpha/beta chains family. F-type ATPases have 2 components, CF(1) - the catalytic core - and CF(0) - the membrane proton channel. CF(1) has five subunits: alpha(3), beta(3), gamma(1), delta(1), epsilon(1). CF(0) has three main subunits: a(1), b(2) and c(9-12). The alpha and beta chains form an alternating ring which encloses part of the gamma chain. CF(1) is attached to CF(0) by a central stalk formed by the gamma and epsilon chains, while a peripheral stalk is formed by the delta and b chains.

The protein resides in the cell membrane. It carries out the reaction ATP + H2O + 4 H(+)(in) = ADP + phosphate + 5 H(+)(out). In terms of biological role, produces ATP from ADP in the presence of a proton gradient across the membrane. The alpha chain is a regulatory subunit. The sequence is that of ATP synthase subunit alpha from Lactobacillus delbrueckii subsp. bulgaricus (strain ATCC 11842 / DSM 20081 / BCRC 10696 / JCM 1002 / NBRC 13953 / NCIMB 11778 / NCTC 12712 / WDCM 00102 / Lb 14).